The chain runs to 397 residues: DNA-directed RNA polymerase subunit Rpo1C (397 aa).

Belongs to the RNA polymerase beta' chain family. In terms of assembly, part of the RNA polymerase complex. An artificial construct of the RNAP clamp domain (including part of this protein) contacts transcription elongation factors Spt4 and Spt5.

The protein localises to the cytoplasm. The enzyme catalyses RNA(n) + a ribonucleoside 5'-triphosphate = RNA(n+1) + diphosphate. Functionally, DNA-dependent RNA polymerase (RNAP) catalyzes the transcription of DNA into RNA using the four ribonucleoside triphosphates as substrates. Forms part of the jaw domain. The chain is DNA-directed RNA polymerase subunit Rpo1C from Pyrococcus furiosus (strain ATCC 43587 / DSM 3638 / JCM 8422 / Vc1).